The primary structure comprises 320 residues: Ribosomal RNA small subunit methyltransferase H (320 aa).

S-adenosyl-L-methionine contacts are provided by residues 42–44 (GGH), Asp62, Phe86, Asp108, and Gln115.

The protein belongs to the methyltransferase superfamily. RsmH family.

Its subcellular location is the cytoplasm. It catalyses the reaction cytidine(1402) in 16S rRNA + S-adenosyl-L-methionine = N(4)-methylcytidine(1402) in 16S rRNA + S-adenosyl-L-homocysteine + H(+). In terms of biological role, specifically methylates the N4 position of cytidine in position 1402 (C1402) of 16S rRNA. The chain is Ribosomal RNA small subunit methyltransferase H from Yersinia pseudotuberculosis serotype O:1b (strain IP 31758).